Consider the following 82-residue polypeptide: ATP synthase subunit c (82 aa).

Helical transmembrane passes span 5–25 (MSLVAGLIAIGAGIAVGFGAI) and 55–75 (FLIIALAFMETLTIYGLVIAF).

This sequence belongs to the ATPase C chain family. In terms of assembly, F-type ATPases have 2 components, F(1) - the catalytic core - and F(0) - the membrane proton channel. F(1) has five subunits: alpha(3), beta(3), gamma(1), delta(1), epsilon(1). F(0) has three main subunits: a(1), b(2) and c(10-14). The alpha and beta chains form an alternating ring which encloses part of the gamma chain. F(1) is attached to F(0) by a central stalk formed by the gamma and epsilon chains, while a peripheral stalk is formed by the delta and b chains.

It is found in the cell membrane. Functionally, f(1)F(0) ATP synthase produces ATP from ADP in the presence of a proton or sodium gradient. F-type ATPases consist of two structural domains, F(1) containing the extramembraneous catalytic core and F(0) containing the membrane proton channel, linked together by a central stalk and a peripheral stalk. During catalysis, ATP synthesis in the catalytic domain of F(1) is coupled via a rotary mechanism of the central stalk subunits to proton translocation. Its function is as follows. Key component of the F(0) channel; it plays a direct role in translocation across the membrane. A homomeric c-ring of between 10-14 subunits forms the central stalk rotor element with the F(1) delta and epsilon subunits. The sequence is that of ATP synthase subunit c from Carboxydothermus hydrogenoformans (strain ATCC BAA-161 / DSM 6008 / Z-2901).